A 464-amino-acid chain; its full sequence is NADH dehydrogenase [ubiquinone] flavoprotein 1, mitochondrial (464 aa).

Residues 1 to 20 (MLATRRLLGWSLPARVSVRF) constitute a mitochondrion transit peptide. K81 is subject to N6-acetyllysine; alternate. K81 carries the N6-succinyllysine; alternate modification. Position 87 to 96 (87 to 96 (GRGGAGFPTG)) interacts with NADH. K104 carries the N6-acetyllysine modification. Residue 199–247 (RGAGAYICGEETALIESIEGKQGKPRLKPPFPADVGVFGCPTTVANVET) coordinates FMN. Omega-N-methylarginine is present on R257. K375 bears the N6-acetyllysine mark. The [4Fe-4S] cluster site is built by C379, C382, C385, and C425.

Belongs to the complex I 51 kDa subunit family. Core subunit of respiratory chain NADH dehydrogenase (Complex I) which is composed of 45 different subunits. This is a component of the flavoprotein-sulfur (FP) fragment of the enzyme. Interacts with RAB5IF. FMN serves as cofactor. [4Fe-4S] cluster is required as a cofactor.

It is found in the mitochondrion inner membrane. The enzyme catalyses a ubiquinone + NADH + 5 H(+)(in) = a ubiquinol + NAD(+) + 4 H(+)(out). Its function is as follows. Core subunit of the mitochondrial membrane respiratory chain NADH dehydrogenase (Complex I) which catalyzes electron transfer from NADH through the respiratory chain, using ubiquinone as an electron acceptor. Part of the peripheral arm of the enzyme, where the electrons from NADH are accepted by flavin mononucleotide (FMN) and then passed along a chain of iron-sulfur clusters by electron tunnelling to the final acceptor ubiquinone. Contains FMN, which is the initial electron acceptor as well as one iron-sulfur cluster. This chain is NADH dehydrogenase [ubiquinone] flavoprotein 1, mitochondrial, found in Homo sapiens (Human).